A 174-amino-acid chain; its full sequence is Adipose-secreted signaling protein (174 aa).

N-acetylalanine is present on A2. Phosphothreonine is present on T147.

This sequence belongs to the ADISSP family.

It localises to the secreted. Its function is as follows. Adipocyte-secreted protein (adipokine) that acts as a key regulator for white adipose tissue (WAT) thermogenesis and glucose homeostasis at least in part through activation of protein kinase A (PKA). This is Adipose-secreted signaling protein from Bos taurus (Bovine).